Consider the following 541-residue polypeptide: Sorting nexin-27 (541 aa).

The segment at M1–S26 is disordered. Residues N17 to S26 are compositionally biased toward gly residues. One can recognise a PDZ domain in the interval V43–P136. Residues S51 and S62 each carry the phosphoserine modification. The PX domain occupies Q161–Y269. The Ras-associating domain maps to S273–F362. Residues S273 to F362 are FERM-like region F1. The FERM-like region F2 stretch occupies residues N373 to C421. The interval N425 to K525 is FERM-like region F3.

As to quaternary structure, core component of the SNX27-retromer, a multiprotein complex composed of SNX27, the WASH complex and the retromer complex. Interacts (via PDZ domain) with a number of target transmembrane proteins (via PDZ-binding motif): ABCC4, ADRB2, ARHGEF7, GRIA1, GRIA2, GRIN1, GRIN2A GRIN2C, KCNJ6, KCNJ9 and SLC2A1/GLUT1. Interacts (via the FERM-like regions) with the WASH complex. Interacts with SNX1. Interacts with CYTIP. Interacts with DGKZ. Interacts with MCC. Interacts (via PDZ domains) with SLC9A3; directs SLC9A3 membrane insertion from early endosomes to the plasma membrane.

Its subcellular location is the early endosome membrane. The protein resides in the cytoplasm. The protein localises to the cytosol. Functionally, involved in the retrograde transport from endosome to plasma membrane, a trafficking pathway that promotes the recycling of internalized transmembrane proteins. Following internalization, endocytosed transmembrane proteins are delivered to early endosomes and recycled to the plasma membrane instead of being degraded in lysosomes. SNX27 specifically binds and directs sorting of a subset of transmembrane proteins containing a PDZ-binding motif at the C-terminus: following interaction with target transmembrane proteins, associates with the retromer complex, preventing entry into the lysosomal pathway, and promotes retromer-tubule based plasma membrane recycling. SNX27 also binds with the WASH complex. Interacts with membranes containing phosphatidylinositol-3-phosphate (PtdIns(3P)). May participate in establishment of natural killer cell polarity. Recruits CYTIP to early endosomes. In Bos taurus (Bovine), this protein is Sorting nexin-27 (SNX27).